The chain runs to 288 residues: 4-diphosphocytidyl-2-C-methyl-D-erythritol kinase (288 aa).

K8 is an active-site residue. P90 to S100 provides a ligand contact to ATP. D132 is an active-site residue.

Belongs to the GHMP kinase family. IspE subfamily.

It catalyses the reaction 4-CDP-2-C-methyl-D-erythritol + ATP = 4-CDP-2-C-methyl-D-erythritol 2-phosphate + ADP + H(+). It functions in the pathway isoprenoid biosynthesis; isopentenyl diphosphate biosynthesis via DXP pathway; isopentenyl diphosphate from 1-deoxy-D-xylulose 5-phosphate: step 3/6. Catalyzes the phosphorylation of the position 2 hydroxy group of 4-diphosphocytidyl-2C-methyl-D-erythritol. This Chlamydia trachomatis serovar D (strain ATCC VR-885 / DSM 19411 / UW-3/Cx) protein is 4-diphosphocytidyl-2-C-methyl-D-erythritol kinase.